The chain runs to 205 residues: Urease accessory protein UreE (205 aa).

The tract at residues 171 to 205 is disordered; the sequence is AHEAHPHAHSHAGGHGHVHSGHGHGGKHGEHDAES. The span at 177-196 shows a compositional bias: basic residues; that stretch reads HAHSHAGGHGHVHSGHGHGG.

Belongs to the UreE family.

It localises to the cytoplasm. In terms of biological role, involved in urease metallocenter assembly. Binds nickel. Probably functions as a nickel donor during metallocenter assembly. The chain is Urease accessory protein UreE from Bordetella bronchiseptica (strain ATCC BAA-588 / NCTC 13252 / RB50) (Alcaligenes bronchisepticus).